Here is a 419-residue protein sequence, read N- to C-terminus: UPF0229 protein Tbd_1233 (419 aa).

Residues 85 to 108 (GDRIDRPAGEGGGGSGGSPDGEGM) form a disordered region. A compositionally biased stretch (gly residues) spans 93–104 (GEGGGGSGGSPD).

Belongs to the UPF0229 family.

The protein is UPF0229 protein Tbd_1233 of Thiobacillus denitrificans (strain ATCC 25259 / T1).